The following is a 92-amino-acid chain: MDLFTIFAMKLLTYNDFFDSVSSALTSWTGKLQGLGIAVIIFCVCIIAFMFMFGEGPSRTAKKWLLYIVVGGVLLWGAGTFASTVQGVTAGF.

Transmembrane regions (helical) follow at residues 34-54 and 65-85; these read GLGIAVIIFCVCIIAFMFMFG and LLYIVVGGVLLWGAGTFASTV.

Its subcellular location is the cell membrane. This is an uncharacterized protein from Bacillus anthracis.